Here is a 78-residue protein sequence, read N- to C-terminus: Large ribosomal subunit protein bL28 (78 aa).

A disordered region spans residues 1-26; it reads MARVCQVTGKRPMSGHNVSHANNKTK.

This sequence belongs to the bacterial ribosomal protein bL28 family.

The sequence is that of Large ribosomal subunit protein bL28 from Nitrosomonas europaea (strain ATCC 19718 / CIP 103999 / KCTC 2705 / NBRC 14298).